The following is a 154-amino-acid chain: 6,7-dimethyl-8-ribityllumazine synthase (154 aa).

5-amino-6-(D-ribitylamino)uracil-binding positions include phenylalanine 23, 57 to 59, and 81 to 83; these read AFE and AVI. 86–87 contacts (2S)-2-hydroxy-3-oxobutyl phosphate; it reads ST. The active-site Proton donor is histidine 89. Position 114 (phenylalanine 114) interacts with 5-amino-6-(D-ribitylamino)uracil. Arginine 128 lines the (2S)-2-hydroxy-3-oxobutyl phosphate pocket.

It belongs to the DMRL synthase family.

The catalysed reaction is (2S)-2-hydroxy-3-oxobutyl phosphate + 5-amino-6-(D-ribitylamino)uracil = 6,7-dimethyl-8-(1-D-ribityl)lumazine + phosphate + 2 H2O + H(+). The protein operates within cofactor biosynthesis; riboflavin biosynthesis; riboflavin from 2-hydroxy-3-oxobutyl phosphate and 5-amino-6-(D-ribitylamino)uracil: step 1/2. In terms of biological role, catalyzes the formation of 6,7-dimethyl-8-ribityllumazine by condensation of 5-amino-6-(D-ribitylamino)uracil with 3,4-dihydroxy-2-butanone 4-phosphate. This is the penultimate step in the biosynthesis of riboflavin. This Campylobacter jejuni subsp. jejuni serotype O:2 (strain ATCC 700819 / NCTC 11168) protein is 6,7-dimethyl-8-ribityllumazine synthase.